Here is an 802-residue protein sequence, read N- to C-terminus: MLNILVLGNGAREHVLVTKLAQSPTVGKIYVAPGNGGTATMDPSRVINWDITPDVANFARLQSMAVEHKINLVVPGPELPLVNGITSVFHSVGIPVFGPSVKAAQLEASKAFSKRFMSKHNIPTASYDVFTNPEEAISFLQAHTDKAFVIKADGIAAGKGVIIPSSIDESVQAIKDIMVTKQFGEEAGKQVVIEQFLEGDEISLLTIVDGYSHFNLPVAQDHKRIFDGDKGLNTGGMGAYAPAPVATPSLLKTIDSQIVKPTIDGMRRDGMPFVGVLFTGMILVKDSKTNQLVPEVLEYNVRFGDPETQAVLSLLDDQTDLAQVFLAAAEHRLDSVNIGIDDTRSAVTVVVAAGGYPESYAKGDKITLDTDKLPPHTQIFQAGTKYDSATDSLLTNGGRVLSVTSTAQDLRTAVDTVYEAVKCVHFQNSYYRKDIAYRAFQNSESSKVAITYADSGVSVDNGNNLVQTIKEMVRSTRRPGADSDIGGFGGLFDLAQAGFRQNEDTLLVGATDGVGTKLIIAQETGIHNTVGIDLVAMNVNDLVVQGAEPLFFLDYFATGALDIQVASDFVSGVANGCIQSGCALVGGETSEMPGMYPPGHYDTNGTAVGAVLRQDILPKINEMAAGDVLLGLASSGVHSNGFSLVRKIIQHVALPWDAPCPWDESKTLGEGILEPTKIYVKQLLPSIRQRLLLGLAHITGGGLVENIPRAIPDHLQARVDMSTWEVPRVFKWFGQAGNVPHDDILRTFNMGVGMVLIVKRENVKAVCDSLTEEGEIIWELGSLQERPKDAPGCVIENGTKLY.

The tract at residues 1–450 (MLNILVLGNG…QNSESSKVAI (450 aa)) is GARS. The ATP-grasp domain occupies 114 to 330 (KRFMSKHNIP…LAQVFLAAAE (217 aa)). Residue 141-203 (QAHTDKAFVI…EQFLEGDEIS (63 aa)) participates in ATP binding. Positions 298 and 300 each coordinate Mg(2+). The AIRS stretch occupies residues 451-802 (TYADSGVSVD…CVIENGTKLY (352 aa)). A phosphoserine mark is found at serine 455 and serine 458.

This sequence in the N-terminal section; belongs to the GARS family. In the C-terminal section; belongs to the AIR synthase family. Mg(2+) serves as cofactor. The cofactor is Mn(2+).

It is found in the cytoplasm. It carries out the reaction 5-phospho-beta-D-ribosylamine + glycine + ATP = N(1)-(5-phospho-beta-D-ribosyl)glycinamide + ADP + phosphate + H(+). It catalyses the reaction 2-formamido-N(1)-(5-O-phospho-beta-D-ribosyl)acetamidine + ATP = 5-amino-1-(5-phospho-beta-D-ribosyl)imidazole + ADP + phosphate + H(+). It participates in purine metabolism; IMP biosynthesis via de novo pathway; 5-amino-1-(5-phospho-D-ribosyl)imidazole from N(2)-formyl-N(1)-(5-phospho-D-ribosyl)glycinamide: step 2/2. The protein operates within purine metabolism; IMP biosynthesis via de novo pathway; N(1)-(5-phospho-D-ribosyl)glycinamide from 5-phospho-alpha-D-ribose 1-diphosphate: step 2/2. Its function is as follows. Catalyzes the second and fifth step in the 'de novo' purine biosynthesis pathway; contains phosphoribosylamine--glycine ligase (GARS) and phosphoribosylformylglycinamidine cyclo-ligase (AIRS) activities. The chain is Bifunctional purine biosynthetic protein ADE5,7 from Saccharomyces cerevisiae (strain ATCC 204508 / S288c) (Baker's yeast).